Here is a 97-residue protein sequence, read N- to C-terminus: UPF0235 protein Ppha_2415 (97 aa).

Belongs to the UPF0235 family.

In Pelodictyon phaeoclathratiforme (strain DSM 5477 / BU-1), this protein is UPF0235 protein Ppha_2415.